Reading from the N-terminus, the 557-residue chain is BZIP-type transcription factor MBZ1 (557 aa).

The segment covering 171–194 (AKAQAQQRQQQQQQQLIQQTQRQT) has biased composition (low complexity). 2 disordered regions span residues 171-209 (AKAQ…TDPI) and 221-273 (MRAK…RQLR). Residues 229–240 (EPESQSVLNNLP) show a composition bias toward polar residues. Residues 254–271 (RLLASEEGKKLSSKERRQ) are compositionally biased toward basic and acidic residues. The 64-residue stretch at 264–327 (LSSKERRQLR…KRLSDLTRML (64 aa)) folds into the bZIP domain. A basic motif region spans residues 267-286 (KERRQLRNKVSARAFRSRRK). The tract at residues 289–296 (ISQLEAEI) is leucine-zipper. Residues 344–364 (PTGLPQGSPVKIEQNPQQEQN) are disordered.

The protein localises to the nucleus. Its function is as follows. BZIP-type transcription factor that functions as either an activator or a suppressor, and which contributes to the regulation of fungal growth, conidiation, cell wall integrity, and virulence. Plays a key role in virulence against insects by mediating cell wall integrity, cell surface hydrophobicity, and adherence to hydrophobic surfaces. Exhibits negative regulation of subtilisin proteases, but positive control of an adhesin gene. The chain is BZIP-type transcription factor MBZ1 from Metarhizium robertsii (strain ARSEF 23 / ATCC MYA-3075) (Metarhizium anisopliae (strain ARSEF 23)).